The chain runs to 105 residues: Thioredoxin (105 aa).

The region spanning 1 to 105 is the Thioredoxin domain; that stretch reads MVNNVTDISF…SLLDWINKSI (105 aa). An intrachain disulfide couples Cys-30 to Cys-33.

Belongs to the thioredoxin family.

In terms of biological role, component of the thioredoxin-thioredoxin reductase system. Participates in various redox reactions through the reversible oxidation of its active center dithiol to a disulfide and catalyzes dithiol-disulfide exchange reactions. The protein is Thioredoxin (trxA) of Rickettsia typhi (strain ATCC VR-144 / Wilmington).